A 327-amino-acid chain; its full sequence is Ribosomal RNA large subunit methyltransferase F (327 aa).

This sequence belongs to the methyltransferase superfamily. METTL16/RlmF family.

Its subcellular location is the cytoplasm. The catalysed reaction is adenosine(1618) in 23S rRNA + S-adenosyl-L-methionine = N(6)-methyladenosine(1618) in 23S rRNA + S-adenosyl-L-homocysteine + H(+). Functionally, specifically methylates the adenine in position 1618 of 23S rRNA. This Marinomonas sp. (strain MWYL1) protein is Ribosomal RNA large subunit methyltransferase F.